Reading from the N-terminus, the 101-residue chain is Small ribosomal subunit protein uS14 (101 aa).

This sequence belongs to the universal ribosomal protein uS14 family. In terms of assembly, part of the 30S ribosomal subunit. Contacts proteins S3 and S10.

Its function is as follows. Binds 16S rRNA, required for the assembly of 30S particles and may also be responsible for determining the conformation of the 16S rRNA at the A site. This chain is Small ribosomal subunit protein uS14, found in Alcanivorax borkumensis (strain ATCC 700651 / DSM 11573 / NCIMB 13689 / SK2).